Here is a 73-residue protein sequence, read N- to C-terminus: Large ribosomal subunit protein uL29 (73 aa).

Belongs to the universal ribosomal protein uL29 family.

The chain is Large ribosomal subunit protein uL29 (rpl29) from Saccharolobus solfataricus (strain ATCC 35092 / DSM 1617 / JCM 11322 / P2) (Sulfolobus solfataricus).